The primary structure comprises 191 residues: Large ribosomal subunit protein uL6 (191 aa).

The protein belongs to the universal ribosomal protein uL6 family. Part of the 50S ribosomal subunit.

This protein binds to the 23S rRNA, and is important in its secondary structure. It is located near the subunit interface in the base of the L7/L12 stalk, and near the tRNA binding site of the peptidyltransferase center. The chain is Large ribosomal subunit protein uL6 from Cyanothece sp. (strain PCC 7425 / ATCC 29141).